Consider the following 576-residue polypeptide: MATHSMIIPSPSSSSSSLATAASPFKETLPLFSRSLTFPRKSLFSQVRLRFFAEKHSQLDTSNGCATNFASLQDSGDQLTEEHVTKGESTLSITVVGASGDLAKKKIFPALFALFYEGCLPQDFSVFGYARTKLTHEELRDMISSTLTCRIDQREKCGDKMEQFLKRCFYHSGQYNSEEDFAELNKKLKEKEAGKISNRLYYLSIPPNIFVDVVRCASLRASSENGWTRVIVEKPFGRDSESSGELTRCLKQYLTEEQIFRIDHYLGKELVENLSVLRFSNLVFEPLWSRNYIRNVQLIFSEDFGTEGRGGYFDQYGIIRDIMQNHLLQILALFAMETPVSLDAEDIRSEKVKVLRSMKPLRLEDVVVGQYKGHNKGGKTYPGYTDDPTVPNHSLTPTFAAAAMFINNARWDGVPFLMKAGKALHTRGAEIRVQFRHVPGNLYKKSFATNLDNATNELVIRVQPDEGIYLRINNKVPGLGMRLDRSDLNLLYRSRYPREIPDAYERLLLDAIEGERRLFIRSDELDAAWDLFTPALKELEEKKIIPELYPYGSRGPVGAHYLASKYNVRWGDLGEA.

Residues 1-50 (MATHSMIIPSPSSSSSSLATAASPFKETLPLFSRSLTFPRKSLFSQVRLR) constitute a chloroplast transit peptide. Residues 97–104 (GASGDLAK) and Arg131 contribute to the NADP(+) site. A disulfide bridge links Cys149 with Cys157. Position 234 (Lys234) interacts with NADP(+). Residues Lys234, 264–268 (HYLGK), Glu302, and Asp321 contribute to the D-glucose 6-phosphate site. The active-site Proton acceptor is His326. NADP(+) is bound at residue Lys419. D-glucose 6-phosphate is bound by residues Lys422 and Arg427. The NADP(+) site is built by Arg432 and Arg461. Gln463 lines the D-glucose 6-phosphate pocket. NADP(+) is bound by residues 469 to 471 (YLR) and Arg554.

This sequence belongs to the glucose-6-phosphate dehydrogenase family. In terms of assembly, forms homodimer. Interacts with G6PD2, G6PD3 and G6PD4. As to expression, expressed in leaves, stems, buds, flowers and siliques.

Its subcellular location is the plastid. It localises to the chloroplast stroma. It is found in the peroxisome. It carries out the reaction D-glucose 6-phosphate + NADP(+) = 6-phospho-D-glucono-1,5-lactone + NADPH + H(+). It functions in the pathway carbohydrate degradation; pentose phosphate pathway; D-ribulose 5-phosphate from D-glucose 6-phosphate (oxidative stage): step 1/3. With respect to regulation, regulated by metabolites. Post-translationally inactivated by cysteine-mediated redox modification via the ferredoxin-thioredoxin system in the light and this avoids futile cycles with photosynthetic CO2 fixation. Its function is as follows. Catalyzes the rate-limiting step of the oxidative pentose-phosphate pathway, which represents a route for the dissimilation of carbohydrates besides glycolysis. The main function of this enzyme is to provide reducing power (NADPH) and pentose phosphates for fatty acid and nucleic acid synthesis which are involved in membrane synthesis and cell division. In Arabidopsis thaliana (Mouse-ear cress), this protein is Glucose-6-phosphate 1-dehydrogenase 1, chloroplastic.